Reading from the N-terminus, the 35-residue chain is Photosystem II reaction center protein T (35 aa).

A helical transmembrane segment spans residues A3–F23.

It belongs to the PsbT family. In terms of assembly, PSII is composed of 1 copy each of membrane proteins PsbA, PsbB, PsbC, PsbD, PsbE, PsbF, PsbH, PsbI, PsbJ, PsbK, PsbL, PsbM, PsbT, PsbY, PsbZ, Psb30/Ycf12, at least 3 peripheral proteins of the oxygen-evolving complex and a large number of cofactors. It forms dimeric complexes.

It localises to the plastid. Its subcellular location is the chloroplast thylakoid membrane. Its function is as follows. Found at the monomer-monomer interface of the photosystem II (PS II) dimer, plays a role in assembly and dimerization of PSII. PSII is a light-driven water plastoquinone oxidoreductase, using light energy to abstract electrons from H(2)O, generating a proton gradient subsequently used for ATP formation. The sequence is that of Photosystem II reaction center protein T from Nelumbo lutea (American lotus).